A 170-amino-acid chain; its full sequence is RNA polymerase sigma factor TcsR (170 aa).

The tract at residues 122-169 (IKDLTQNEKNILRKIYLHGLRESEISRELNISRQAVNKTHLRALEKLK) is sigma-70 factor domain-4. A DNA-binding region (H-T-H motif) is located at residues 143–162 (ESEISRELNISRQAVNKTHL).

It belongs to the sigma-70 factor family.

In terms of biological role, sigma factors are initiation factors that promote the attachment of RNA polymerase to specific initiation sites and are then released. Transcriptional regulator specifically required to activate expression of the toxin gene locus, composed of tcsL and tcdE/utxA. The protein is RNA polymerase sigma factor TcsR of Paraclostridium sordellii (strain ATCC 9714 / DSM 2141 / JCM 3814 / LMG 15708 / NCIMB 10717 / 211) (Clostridium sordellii).